Consider the following 921-residue polypeptide: Respiratory burst oxidase homolog protein D (921 aa).

The segment at 1-71 (MKMRRGNSSN…RSNSVAGGRG (71 aa)) is disordered. At 1 to 376 (MKMRRGNSSN…KYFILDNWQR (376 aa)) the chain is on the cytoplasmic side. Phosphoserine is present on residues S8, S9, S26, and S39. Over residues 21-31 (NSDTNSDTESI) the composition is skewed to polar residues. The segment covering 44-53 (RPKRASKKNA) has biased composition (basic residues). 2 EF-hand-like regions span residues 193–203 (SADSNGLLLSA) and 230–241 (NNVSGDAITKEQ). 2 consecutive EF-hand domains span residues 253–288 (SFDAKLQVFFDMVDKDEDGRVTEEEVAEIISLSASA) and 297–332 (QAKEYAALIMEELDPDNAGFIMIENLEMLLLQAPNQ). Ca(2+) is bound by residues D266, D268, D270, R272, and E277. A phosphoserine mark is found at S339, S343, and S347. Residues 377 to 397 (LWIMMLWLGICGGLFTYKFIQ) traverse the membrane as a helical segment. The Extracellular segment spans residues 398-461 (YKNKAAYGVM…FDDSLNFHKV (64 aa)). Residues 415 to 572 (KGGAETLKFN…LFIIVYALLI (158 aa)) enclose the Ferric oxidoreductase domain. Residues 462-482 (IASGIVVGVLLHAGAHLTCDF) form a helical membrane-spanning segment. Topologically, residues 483–516 (PRLIAADEDTYEPMEKYFGDQPTSYWWFVKGVEG) are cytoplasmic. A helical membrane pass occupies residues 517–537 (WTGIVMVVLMAIAFTLATPWF). At 538–559 (RRNKLNLPNFLKKLTGFNAFWY) the chain is on the extracellular side. Residues 560-580 (THHLFIIVYALLIVHGIKLYL) form a helical membrane-spanning segment. Topologically, residues 581 to 588 (TKIWYQKT) are cytoplasmic. The chain crosses the membrane as a helical span at residues 589–606 (TWMYLAVPILLYASERLL). Over 607-734 (RAFRSSIKPV…PYGAPAQDYK (128 aa)) the chain is Extracellular. An FAD-binding FR-type domain is found at 611–732 (SSIKPVKMIK…DGPYGAPAQD (122 aa)). A helical transmembrane segment spans residues 735-755 (KYDVVLLVGLGIGATPMISIL). Over 756-921 (KDIINNMKGP…TKFDFHKENF (166 aa)) the chain is Cytoplasmic.

It belongs to the RBOH (TC 5.B.1.3) family. Monomer and homodimer. Interacts with BIK1 and FLS2. Interacts with PBL13. Binds to SIK1 upon flagellin perception and becomes activated by phosphorylation. Post-translationally, phosphorylated at Ser-39, Ser-343 and Ser-347 by BIK1 upon flagellin (flg22) treatment. Activated by phosphorylation at Ser-347 mediated by SIK1 and at Ser-8, Ser-9 and Ser-339 upon flagellin (e.g. flg22) perception. In terms of tissue distribution, more abundant in roots than in leaves, stems or inflorescences. Expressed in mesophyll and guard cells.

It localises to the membrane. With respect to regulation, inhibited by diphenylene iodinium (DPI). Calcium-dependent NADPH oxidase that generates superoxide. Involved in the generation of reactive oxygen species (ROS) during incompatible interactions with pathogens, in response to pathogen-associated molecular pattern (PAMP)-triggered immunity (PTI) signaling and in UV-B and abscisic acid ROS-dependent signaling and via SIK1 mediated activation by phosphorylation. Might be required for ROS signal amplification during light stress. This Arabidopsis thaliana (Mouse-ear cress) protein is Respiratory burst oxidase homolog protein D.